The chain runs to 465 residues: Cysteine--tRNA ligase (465 aa).

Cysteine 27 provides a ligand contact to Zn(2+). The 'HIGH' region motif lies at 29–39 (PTVYDDAHLGH). Residues 153-173 (DISHKVSDDDTQSRVEHNSEK) are disordered. Zn(2+) is bound by residues cysteine 208, histidine 237, and glutamate 241. A 'KMSKS' region motif is present at residues 269-273 (KMSKS). Lysine 272 lines the ATP pocket.

Belongs to the class-I aminoacyl-tRNA synthetase family. As to quaternary structure, monomer. The cofactor is Zn(2+).

It localises to the cytoplasm. It catalyses the reaction tRNA(Cys) + L-cysteine + ATP = L-cysteinyl-tRNA(Cys) + AMP + diphosphate. In Sulfurovum sp. (strain NBC37-1), this protein is Cysteine--tRNA ligase.